We begin with the raw amino-acid sequence, 438 residues long: GTPase Der (438 aa).

2 consecutive EngA-type G domains span residues 4–168 and 177–352; these read PIVA…PKGY and IRIA…TNYS. GTP contacts are provided by residues 10–17, 57–61, 120–123, 183–190, 230–234, and 295–298; these read GRPNVGKS, DTGGI, NKID, GKPNVGKS, DTAGL, and NKWD. Residues 353–437 enclose the KH-like domain; sequence KRISTGVLND…GIKMEFRERK (85 aa).

It belongs to the TRAFAC class TrmE-Era-EngA-EngB-Septin-like GTPase superfamily. EngA (Der) GTPase family. In terms of assembly, associates with the 50S ribosomal subunit.

In terms of biological role, GTPase that plays an essential role in the late steps of ribosome biogenesis. This is GTPase Der from Clostridium tetani (strain Massachusetts / E88).